Here is a 533-residue protein sequence, read N- to C-terminus: (E)-beta-farnesene synthase (533 aa).

Mg(2+) is bound by residues Asp-286, Asp-290, Asn-430, Ser-434, and Glu-438. A DDXXD motif motif is present at residues 286–290 (DDMMD).

Belongs to the terpene synthase family. Mg(2+) is required as a cofactor. Co(2+) serves as cofactor. Requires Mn(2+) as cofactor.

It localises to the cytoplasm. The catalysed reaction is (2E,6E)-farnesyl diphosphate = (E)-beta-farnesene + diphosphate. It functions in the pathway secondary metabolite biosynthesis; terpenoid biosynthesis. Functionally, sesquiterpene cyclase catalyzing the production of beta-farnesene and alpha-bergamotene in equal amounts from farnesyl diphosphate. Involved in indirect defense by producing volatile signals attracting natural enemies of herbivores. The protein is (E)-beta-farnesene synthase of Zea mays subsp. huehuetenangensis (San Antonio Huista teosinte).